A 921-amino-acid chain; its full sequence is Isoleucine--tRNA ligase (921 aa).

Positions 59 to 69 match the 'HIGH' region motif; the sequence is PYANGHLHIGH. Position 569 (glutamate 569) interacts with L-isoleucyl-5'-AMP. Residues 610-614 carry the 'KMSKS' region motif; that stretch reads KMSKS. Lysine 613 contributes to the ATP binding site. Positions 896, 899, 911, and 914 each coordinate Zn(2+).

Belongs to the class-I aminoacyl-tRNA synthetase family. IleS type 1 subfamily. Monomer. The cofactor is Zn(2+).

The protein resides in the cytoplasm. It carries out the reaction tRNA(Ile) + L-isoleucine + ATP = L-isoleucyl-tRNA(Ile) + AMP + diphosphate. Its function is as follows. Catalyzes the attachment of isoleucine to tRNA(Ile). As IleRS can inadvertently accommodate and process structurally similar amino acids such as valine, to avoid such errors it has two additional distinct tRNA(Ile)-dependent editing activities. One activity is designated as 'pretransfer' editing and involves the hydrolysis of activated Val-AMP. The other activity is designated 'posttransfer' editing and involves deacylation of mischarged Val-tRNA(Ile). The polypeptide is Isoleucine--tRNA ligase (Campylobacter hominis (strain ATCC BAA-381 / DSM 21671 / CCUG 45161 / LMG 19568 / NCTC 13146 / CH001A)).